We begin with the raw amino-acid sequence, 429 residues long: Adenylosuccinate synthetase (429 aa).

GTP-binding positions include 12–18 (GDEGKGK) and 40–42 (GHT). The active-site Proton acceptor is Asp13. Residues Asp13 and Gly40 each contribute to the Mg(2+) site. IMP-binding positions include 13–16 (DEGK), 38–41 (NAGH), Thr129, Arg143, Gln224, Thr239, and Arg303. Residue His41 is the Proton donor of the active site. 299–305 (ATTGRRR) provides a ligand contact to substrate. GTP is bound by residues Arg305, 331–333 (KLD), and 413–415 (SVG).

This sequence belongs to the adenylosuccinate synthetase family. Homodimer. It depends on Mg(2+) as a cofactor.

The protein resides in the cytoplasm. The enzyme catalyses IMP + L-aspartate + GTP = N(6)-(1,2-dicarboxyethyl)-AMP + GDP + phosphate + 2 H(+). The protein operates within purine metabolism; AMP biosynthesis via de novo pathway; AMP from IMP: step 1/2. Plays an important role in the de novo pathway of purine nucleotide biosynthesis. Catalyzes the first committed step in the biosynthesis of AMP from IMP. This chain is Adenylosuccinate synthetase, found in Desulforapulum autotrophicum (strain ATCC 43914 / DSM 3382 / VKM B-1955 / HRM2) (Desulfobacterium autotrophicum).